A 107-amino-acid chain; its full sequence is UPF0145 protein ECA2666 (107 aa).

This sequence belongs to the UPF0145 family.

The sequence is that of UPF0145 protein ECA2666 from Pectobacterium atrosepticum (strain SCRI 1043 / ATCC BAA-672) (Erwinia carotovora subsp. atroseptica).